Consider the following 335-residue polypeptide: 2-acylglycerol O-acyltransferase 1 (335 aa).

2 helical membrane passes run 24 to 44 (WVFS…CLVL) and 47 to 67 (VWLL…TPQA). N125 and N180 each carry an N-linked (GlcNAc...) asparagine glycan.

This sequence belongs to the diacylglycerol acyltransferase family.

Its subcellular location is the endoplasmic reticulum membrane. The catalysed reaction is a 2-acylglycerol + an acyl-CoA = a 1,2-diacylglycerol + CoA. The enzyme catalyses a 2-acylglycerol + an acyl-CoA = a 1,2-diacyl-sn-glycerol + CoA. It carries out the reaction a 2-acylglycerol + an acyl-CoA = a 2,3-diacyl-sn-glycerol + CoA. It catalyses the reaction a 1-acylglycerol + an acyl-CoA = a 1,2-diacylglycerol + CoA. The catalysed reaction is a 1-acylglycerol + an acyl-CoA = a 1,3-diacylglycerol + CoA. The enzyme catalyses a 1-acyl-sn-glycerol + an acyl-CoA = a 1,3-diacyl-sn-glycerol + CoA. It carries out the reaction a 3-acyl-sn-glycerol + an acyl-CoA = a 1,3-diacyl-sn-glycerol + CoA. It participates in glycerolipid metabolism; triacylglycerol biosynthesis. In terms of biological role, involved in glycerolipid synthesis and lipid metabolism. Catalyzes the formation of diacylglycerol, the precursor of triacylglycerol, by transferring the acyl chain of a fatty acyl-CoA to a monoacylglycerol, mainly at the sn-1 or sn-3 positions. It uses both sn-2-monoacylglycerol (2-acylglycerol) and sn-1-monoacylglycerol (1-acyl-sn-glycerol) equally well as substrates, and uses sn-3-monoacylglycerol (3-acyl-sn-glycerol) with lower efficiency. This chain is 2-acylglycerol O-acyltransferase 1 (mogat1), found in Xenopus laevis (African clawed frog).